Reading from the N-terminus, the 185-residue chain is Photosystem I assembly protein Ycf4 (185 aa).

A run of 2 helical transmembrane segments spans residues Tyr24–Ser44 and Ala58–Leu78.

The protein belongs to the Ycf4 family.

The protein resides in the cellular thylakoid membrane. In terms of biological role, seems to be required for the assembly of the photosystem I complex. The sequence is that of Photosystem I assembly protein Ycf4 from Prochlorococcus marinus (strain MIT 9215).